The primary structure comprises 465 residues: Adenosine 3'-phospho 5'-phosphosulfate transporter 1 (465 aa).

A run of 10 helical transmembrane segments spans residues 13 to 33, 61 to 81, 142 to 162, 185 to 205, 270 to 290, 299 to 319, 339 to 359, 370 to 390, 391 to 407, and 424 to 444; these read LVIC…SDLL, FLKL…GFLI, AVQL…WGVL, QFLV…YLQW, SYEY…MSGS, VTTL…SFTA, GVNL…GGFM, KFVF…LFIY, HTID…IMTL, and ISLL…LRVY.

This sequence belongs to the nucleotide-sugar transporter family. SLC35B subfamily. Expressed throughout embryogenesis. During oogenesis, it is expressed strongly in the nurse cells of the germline. Maternally expressed at the syncytial blastoderm stage. Zygotically expressed, from after germ-band elongation in the invaginating salivary gland placodes. Remains expressed predominantly in this tissue throughout embryogenesis, but low-level expression may also be present throughout the embryo.

The protein resides in the golgi apparatus membrane. Mediates the transport of adenosine 3'-phospho 5'-phosphosulfate (PAPS), from cytosol into Golgi. PAPS is a universal sulfuryl donor for sulfation events that take place in the Golgi. Required for the dorsoventral patterning, suggesting that it mediates the transport of the sulfate donor required for the sulfotransferase activity of pip (pipe). The polypeptide is Adenosine 3'-phospho 5'-phosphosulfate transporter 1 (sll) (Drosophila melanogaster (Fruit fly)).